The primary structure comprises 310 residues: Atrochrysone carboxyl ACP thioesterase CPUR_05436 (310 aa).

His105, His107, Asp109, and His110 together coordinate Zn(2+). Asp109 (proton donor/acceptor) is an active-site residue.

It belongs to the metallo-beta-lactamase superfamily. Zn(2+) serves as cofactor.

It carries out the reaction atrochrysone carboxyl-[ACP] + H2O = atrochrysone carboxylate + holo-[ACP] + H(+). The protein operates within pigment biosynthesis. In terms of biological role, atrochrysone carboxyl ACP thioesterase; part of the ergochrome gene cluster responsible for the typical purple-black color of the ergot sclerotia. The ergochrome gene cluster produces several ergot pigments including the yellow ergochrome secalonic acid and its derivatives, as well as the red anthraquinones endocrocin and clavorubin. The pathway begins with the synthesis of atrochrysone thioester by the polyketide synthase (PKS) CPUR_05437. The atrochrysone carboxyl ACP thioesterase CPUR_05436 then breaks the thioester bond and releases the atrochrysone carboxylic acid from CPUR_05437. The atrochrysone carboxylic acid is then converted to atrochrysone which is further transformed into emodin anthrone. The next step is performed by the anthrone oxygenase CPUR_05434 that catalyzes the oxidation of emodinanthrone to emodin. Emodin is further modified to yield monodictyphenone via several steps involving CPUR_05427, CPUR_05428, CPUR_05429 and CPUR_05430. The short chain dehydrogenase/reductase CPUR_05418 then catalyzes the C-5 ketoreduction to give the xanthone skeleton of the monomeric units. Ergochromes formation requires further dimerization steps of different xanthone units, probably catalyzed by the cytochrome P450 monooxygenase CPUR_05419. CPUR_05425, CPUR_05426 and CPUR_05431 are unique to Claviceps, thus it is likely that they are involved in further modification of xanthone units or in their dimerization. The yellow ergochromes and the red anthraquinone pigments endocrocin and clavorubin are products from the same PKS derived precursors and the latter are likely shunt products in the pathway of xanthone biosynthesis. It is proposed that atrochrysone carboxylic acid released from the PKS CPUR_05437 can also be converted to endocrocin anthrone which is further oxidized into endocrocin by CPUR_05435. Endocrocin could be then modified to clavorubin, possibly by CPUR_05423 and CPUR_05431. Clavorubin is the principal anthraquinone metabolite produced by the cluster with a much higher yield compared to endocrocin. This Claviceps purpurea (strain 20.1) (Ergot fungus) protein is Atrochrysone carboxyl ACP thioesterase CPUR_05436.